A 295-amino-acid chain; its full sequence is GTPase Era (295 aa).

The region spanning 7 to 176 is the Era-type G domain; the sequence is KTISVCIIGR…IKSKAKVSPW (170 aa). The segment at 15–22 is G1; sequence GRPNSGKS. 15 to 22 lines the GTP pocket; the sequence is GRPNSGKS. The interval 41-45 is G2; it reads QTTRS. The interval 62 to 65 is G3; sequence DTPG. GTP contacts are provided by residues 62–66 and 124–127; these read DTPGI and NKID. The interval 124-127 is G4; the sequence is NKID. The G5 stretch occupies residues 152 to 154; that stretch reads ISA. Residues 204 to 281 form the KH type-2 domain; it reads LQQELPYKLT…HLFLFVKVHA (78 aa).

This sequence belongs to the TRAFAC class TrmE-Era-EngA-EngB-Septin-like GTPase superfamily. Era GTPase family. As to quaternary structure, monomer.

The protein localises to the cytoplasm. Its subcellular location is the cell inner membrane. Its function is as follows. An essential GTPase that binds both GDP and GTP, with rapid nucleotide exchange. Plays a role in 16S rRNA processing and 30S ribosomal subunit biogenesis and possibly also in cell cycle regulation and energy metabolism. The sequence is that of GTPase Era from Rickettsia typhi (strain ATCC VR-144 / Wilmington).